A 190-amino-acid polypeptide reads, in one-letter code: MNNNLQRDAIAAAIDVLNEERVIAYPTEAVFGVGCDPDSETAVMRLLELKQRPVDKGLILIAANYEQLKPYIDDTMLTDVQRETIFSRWPGPVTFVFPAPATTPRWLTGRFDSLAVRVTDHPLVVALCQAYGKPLVSTSANLSGLPPCRTVDEVRAQFGAAFPVVPGETGGRLNPSEIRDALTGELFRQG.

Residues 7-190 (RDAIAAAIDV…ALTGELFRQG (184 aa)) enclose the YrdC-like domain.

This sequence belongs to the SUA5 family. TsaC subfamily.

It is found in the cytoplasm. It catalyses the reaction L-threonine + hydrogencarbonate + ATP = L-threonylcarbamoyladenylate + diphosphate + H2O. Functionally, required for the formation of a threonylcarbamoyl group on adenosine at position 37 (t(6)A37) in tRNAs that read codons beginning with adenine. Catalyzes the conversion of L-threonine, HCO(3)(-)/CO(2) and ATP to give threonylcarbamoyl-AMP (TC-AMP) as the acyladenylate intermediate, with the release of diphosphate. This Escherichia coli O9:H4 (strain HS) protein is Threonylcarbamoyl-AMP synthase.